A 506-amino-acid chain; its full sequence is Cobyric acid synthase (506 aa).

The GATase cobBQ-type domain occupies aspartate 251–phenylalanine 448. The active-site Nucleophile is cysteine 332. Residue histidine 440 is part of the active site.

It belongs to the CobB/CobQ family. CobQ subfamily.

It participates in cofactor biosynthesis; adenosylcobalamin biosynthesis. In terms of biological role, catalyzes amidations at positions B, D, E, and G on adenosylcobyrinic A,C-diamide. NH(2) groups are provided by glutamine, and one molecule of ATP is hydrogenolyzed for each amidation. The protein is Cobyric acid synthase of Citrobacter koseri (strain ATCC BAA-895 / CDC 4225-83 / SGSC4696).